We begin with the raw amino-acid sequence, 94 residues long: Large ribosomal subunit protein eL31 (94 aa).

Belongs to the eukaryotic ribosomal protein eL31 family.

The polypeptide is Large ribosomal subunit protein eL31 (rpl31e) (Pyrococcus abyssi (strain GE5 / Orsay)).